The following is a 306-amino-acid chain: MENLQLVLLLIGAIAIIAVLVHGFWSIRKQQPKGYKQGSMVGINRERRDAEGFDNDGIGEVRVVKSTPAEAETSKPDVNEQAPQFIEPVEEAFELSQAPAIKVNKTRVEPSLSAEAPAFTAEAPVQESLFATDEPLLAEPVIEARQAPLDVAPQEPVVDEPKQVATEALGEPQDVLVLHVVAKEGKELSGAELLPCLLTLNFKFGDLNIFHRHEDNAGTGKVLFSMANMVKPGVFDPDNMEQFSTQGVVLFMTLPCYGDALMNFSIMLNSAHQIADDLGGVLLDGGRDEWLESTKQNYIQRIRAQA.

Residues 1-6 are Periplasmic-facing; it reads MENLQL. A helical membrane pass occupies residues 7–27; it reads VLLLIGAIAIIAVLVHGFWSI. Residues 28–306 are Cytoplasmic-facing; that stretch reads RKQQPKGYKQ…NYIQRIRAQA (279 aa).

Belongs to the ZipA family. As to quaternary structure, interacts with FtsZ via their C-terminal domains.

Its subcellular location is the cell inner membrane. Its function is as follows. Essential cell division protein that stabilizes the FtsZ protofilaments by cross-linking them and that serves as a cytoplasmic membrane anchor for the Z ring. Also required for the recruitment to the septal ring of downstream cell division proteins. The protein is Cell division protein ZipA of Shewanella halifaxensis (strain HAW-EB4).